The following is a 321-amino-acid chain: MATSNATDDLFASYDAEYWNTYLDARPTYSSDFYSIIFEHHAQKGSDSWALAHDVGTGPGNVAAVLAQRFEQVIATDASPDTVNAAQKRQQQTNKIRFAECKGENLALAGLSPPRTADLVANAEAIPLMDAEEAIGCFAELLAPGGTCAVWFYGRPKFAGPDTAVNEACQRIFYRISTRLLNKIGGVSGPLWERSTRTIASQLDNVAFPTAQWRDVVRYKWNCEQTTMLFHDESQFGGPVERVNCVGPAEEVVSKTDPGFWQMQWGAAEVRRWFEAHLPTWFEDKAEDLELEGWYEELDRVLGGKSLPVTWPVVLLLATRV.

Belongs to the methyltransferase superfamily.

The protein operates within secondary metabolite biosynthesis; flavonoid biosynthesis. Its function is as follows. Methyltransferase; part of the gene cluster that mediates the biosynthesis of chlorflavonin, a fungal flavonoid with acetolactate synthase inhibitory activity. Within the pathway, cfoB is responsible for the methylation at position C7-OH of flavonoid. The pathway begins with the PKS-NRPS hybrid synthetase cfoA that uses benzoic acid or p-hydroxybenzoic acid as a starter unit with four rounds of chain elongation using malonyl-CoA to form the chalcone skeleton. Then, a new type of chalcone isomerase, cfoK, catalyzes the conversion of the chalcone into a flavanone by a histidine-mediated oxa-Michael addition mechanism. The desaturation of flavanone to flavone is catalyzed by a new type of flavone synthase, the flavin mononucleotide (FMN)-dependent oxidoreductase cfoJ. Monooxygenases cfoF, cfoG, and P450 cfoH are responsible for the hydroxylation of the flavonoid skeleton at sites C3, C8, and C2', respectively. Like cfoF, the dehydratase cfoI also plays a role in the hydroxylation of position C3. Methyltransferases cfoB, cfoC, and cfoD then catalyze the methylation of C7-OH, C8-OH, and C3-OH, respectively. Finally, the monooxygenase cfoE is responsible for the chlorination of flavonoid at position C3'. The polypeptide is Methyltransferase cfoB (Aspergillus candidus).